The sequence spans 169 residues: Ribosome maturation factor RimM (169 aa).

Residues 93–166 (GEHEFYYHEI…RIQITPLPGL (74 aa)) form the PRC barrel domain.

This sequence belongs to the RimM family. As to quaternary structure, binds ribosomal protein uS19.

Its subcellular location is the cytoplasm. An accessory protein needed during the final step in the assembly of 30S ribosomal subunit, possibly for assembly of the head region. Essential for efficient processing of 16S rRNA. May be needed both before and after RbfA during the maturation of 16S rRNA. It has affinity for free ribosomal 30S subunits but not for 70S ribosomes. The protein is Ribosome maturation factor RimM of Exiguobacterium sibiricum (strain DSM 17290 / CCUG 55495 / CIP 109462 / JCM 13490 / 255-15).